The primary structure comprises 150 residues: Large ribosomal subunit protein bL9 (150 aa).

The protein belongs to the bacterial ribosomal protein bL9 family.

Binds to the 23S rRNA. This chain is Large ribosomal subunit protein bL9, found in Sodalis glossinidius (strain morsitans).